The sequence spans 822 residues: Fibroblast growth factor receptor 1 (822 aa).

The N-terminal stretch at 1 to 21 (MWGWRGLLFWAVLVTATLCTA) is a signal peptide. At 22–376 (RPAPTLPEQA…AVMTSPLYLE (355 aa)) the chain is on the extracellular side. One can recognise an Ig-like C2-type 1 domain in the interval 25-119 (PTLPEQAQPW…DTTYFSVNVS (95 aa)). A disulfide bond links C55 and C101. Residues N77 and N117 are each glycosylated (N-linked (GlcNAc...) asparagine). The segment at 120-162 (DALPSSEDDDDDDDSSSEEKETDNTKPNRRPVAPYWTSPEKME) is disordered. The segment covering 125-135 (SEDDDDDDDSS) has biased composition (acidic residues). Basic and acidic residues predominate over residues 136–145 (SEEKETDNTK). Ig-like C2-type domains are found at residues 158-246 (PEKM…YQLD) and 255-357 (PILQ…AWLT). The heparin-binding stretch occupies residues 160 to 177 (KMEKKLHAVPAAKTVKFK). A disulfide bridge connects residues C178 and C230. 6 N-linked (GlcNAc...) asparagine glycosylation sites follow: N227, N240, N264, N296, N317, and N330. C277 and C341 are disulfide-bonded. A helical transmembrane segment spans residues 377-397 (IIIYCTGAFLISCMVGSVIIY). The Cytoplasmic portion of the chain corresponds to 398–822 (KMKSGTKKSD…QLANGGLNRR (425 aa)). At Y463 the chain carries Phosphotyrosine; by autocatalysis. Residues 478–767 (LVLGKPLGEG…VALTSNQEYL (290 aa)) enclose the Protein kinase domain. Residues 484-490 (LGEGCFG), K514, 562-564 (EYA), and N568 contribute to the ATP site. Phosphotyrosine; by autocatalysis is present on residues Y583 and Y585. The active-site Proton acceptor is the D623. ATP-binding residues include R627 and D641. Residues Y653, Y654, Y730, and Y766 each carry the phosphotyrosine; by autocatalysis modification. Positions 770 to 822 (SMPLDQDSPSFPDTRSSTCSSGEDSVFSHEPFPEEPCLPRHPTQLANGGLNRR) are disordered. The segment covering 776-792 (DSPSFPDTRSSTCSSGE) has biased composition (polar residues).

It belongs to the protein kinase superfamily. Tyr protein kinase family. Fibroblast growth factor receptor subfamily. As to quaternary structure, monomer. Homodimer after ligand binding. Interacts predominantly with FGF1 and FGF2, but can also interact with FGF3, FGF4, FGF5, FGF6, FGF8, FGF10, FGF19, FGF21, FGF22 and FGF23 (in vitro). Ligand specificity is determined by tissue-specific expression of isoforms, and differences in the third Ig-like domain are crucial for ligand specificity. Affinity for fibroblast growth factors (FGFs) is increased by heparan sulfate glycosaminoglycans that function as coreceptors. Likewise, KLB increases the affinity for FGF19, FGF21 and FGF23. Interacts (phosphorylated on Tyr-766) with PLCG1 (via SH2 domains). Interacts with FRS2. Interacts (via C-terminus) with NEDD4 (via WW3 domain). Interacts with RPS6KA1. Interacts with KL. Interacts with SHB (via SH2 domain) and GRB10. Interacts with ANOS1; this interaction does not interfere with FGF2-binding to FGFR1, but prevents binding of heparin-bound FGF2. Interacts with SOX2 and SOX3. Interacts with FLRT1, FLRT2 and FLRT3. Found in a ternary complex with FGF1 and ITGAV:ITGB3. In terms of processing, autophosphorylated. Binding of FGF family members together with heparan sulfate proteoglycan or heparin promotes receptor dimerization and autophosphorylation on tyrosine residues. Autophosphorylation occurs in trans between the two FGFR molecules present in the dimer and proceeds in a highly ordered manner. Initial autophosphorylation at Tyr-653 increases the kinase activity by a factor of 50 to 100. After this, Tyr-583 becomes phosphorylated, followed by phosphorylation of Tyr-463, Tyr-766, Tyr-583 and Tyr-585. In a third stage, Tyr-654 is autophosphorylated, resulting in a further tenfold increase of kinase activity. Phosphotyrosine residues provide docking sites for interacting proteins and so are crucial for FGFR1 function and its regulation. Ubiquitinated. FGFR1 is rapidly ubiquitinated by NEDD4 after autophosphorylation, leading to internalization and lysosomal degradation. CBL is recruited to activated FGFR1 via FRS2 and GRB2, and mediates ubiquitination and subsequent degradation of FGFR1. Post-translationally, N-glycosylated in the endoplasmic reticulum. The N-glycan chains undergo further maturation to an Endo H-resistant form in the Golgi apparatus. Expressed in the parathyroid.

It is found in the cell membrane. It localises to the nucleus. The protein resides in the cytoplasm. Its subcellular location is the cytosol. The protein localises to the cytoplasmic vesicle. The enzyme catalyses L-tyrosyl-[protein] + ATP = O-phospho-L-tyrosyl-[protein] + ADP + H(+). With respect to regulation, present in an inactive conformation in the absence of bound ligand. Ligand binding leads to dimerization and activation by sequential autophosphorylation on tyrosine residues. Tyrosine-protein kinase that acts as a cell-surface receptor for fibroblast growth factors and plays an essential role in the regulation of embryonic development, cell proliferation, differentiation and migration. Required for normal mesoderm patterning and correct axial organization during embryonic development, normal skeletogenesis and normal development of the gonadotropin-releasing hormone (GnRH) neuronal system. Phosphorylates PLCG1, FRS2, GAB1 and SHB. Ligand binding leads to the activation of several signaling cascades. Activation of PLCG1 leads to the production of the cellular signaling molecules diacylglycerol and inositol 1,4,5-trisphosphate. Phosphorylation of FRS2 triggers recruitment of GRB2, GAB1, PIK3R1 and SOS1, and mediates activation of RAS, MAPK1/ERK2, MAPK3/ERK1 and the MAP kinase signaling pathway, as well as of the AKT1 signaling pathway. Promotes phosphorylation of SHC1, STAT1 and PTPN11/SHP2. In the nucleus, enhances RPS6KA1 and CREB1 activity and contributes to the regulation of transcription. FGFR1 signaling is down-regulated by IL17RD/SEF, and by FGFR1 ubiquitination, internalization and degradation. This is Fibroblast growth factor receptor 1 (Fgfr1) from Rattus norvegicus (Rat).